A 2266-amino-acid chain; its full sequence is Protein ELYS (2266 aa).

The seven-bladed beta propeller repeats stretch occupies residues 1–494 (MRDLRAQVTS…SGVVHLTCTG (494 aa)). Positions 1–981 (MRDLRAQVTS…QTLKINVMND (981 aa)) are necessary for cytoplasmic localization. Residues serine 509, serine 528, serine 1080, serine 1138, serine 1142, serine 1150, serine 1153, serine 1155, and serine 1160 each carry the phosphoserine modification. The interval 591 to 1092 (VVLTKEEFDR…IEEPSPIVYS (502 aa)) is important for nuclear localization. The disordered stretch occupies residues 1019–2266 (YHLSTSSVFR…PKQILRRKML (1248 aa)). The tract at residues 1149 to 2266 (RSLPSSSQLK…PKQILRRKML (1118 aa)) is necessary for nuclear localization. Threonine 1175 is modified (phosphothreonine). Residues serine 1214, serine 1218, serine 1222, serine 1232, and serine 1250 each carry the phosphoserine modification. Residue threonine 1257 is modified to Phosphothreonine. Serine 1283 and serine 1297 each carry phosphoserine. Composition is skewed to polar residues over residues 1305 to 1320 (KGNS…TTLE) and 1335 to 1353 (FTAS…NVTE). A Phosphothreonine modification is found at threonine 1369. Residues serine 1371 and serine 1513 each carry the phosphoserine modification. Residues 1446–1698 (RANDNKSMAD…MEQSIHETIP (253 aa)) are mediates transcriptional activity. Threonine 1517 is modified (phosphothreonine). Residues serine 1533, serine 1541, serine 1729, and serine 1806 each carry the phosphoserine modification. Polar residues-rich tracts occupy residues 1796–1808 (LSQN…NSVT) and 1822–1838 (ILEN…ITTG). At threonine 1808 the chain carries Phosphothreonine. The important for nuclear localization and chromatin binding stretch occupies residues 1842-2266 (KRLKSSQLLE…PKQILRRKML (425 aa)). A phosphoserine mark is found at serine 1878, serine 1884, and serine 1898. The segment covering 1908-1919 (STNLDASENTGN) has biased composition (polar residues). 2 stretches are compositionally biased toward basic and acidic residues: residues 1920–1930 (KQDDKSSDKQL) and 1940–1952 (GREV…REDS). Phosphoserine is present on residues serine 1944 and serine 1946. The a.T hook DNA-binding region spans 1971-1983 (PRKRGRPRKINPS). Basic and acidic residues predominate over residues 1986–2004 (VGSKAVKEERSPKKKEAPS). 4 positions are modified to phosphoserine: serine 1996, serine 2043, serine 2044, and serine 2060. Over residues 2064–2084 (VSEERTDEMTHKETNEQEERL) the composition is skewed to basic and acidic residues. Serine 2089, serine 2120, serine 2123, and serine 2154 each carry phosphoserine. Basic and acidic residues predominate over residues 2169 to 2179 (NKLEDELKDDA). The segment covering 2188-2197 (PKAKRIRTSK) has biased composition (basic residues). Phosphoserine occurs at positions 2212, 2222, and 2226.

This sequence belongs to the ELYS family. Associates with the Nup107-160 subcomplex of the NPC.

It is found in the cytoplasm. The protein resides in the nucleus. The protein localises to the nucleus envelope. It localises to the nucleus matrix. Its subcellular location is the chromosome. It is found in the centromere. The protein resides in the kinetochore. The protein localises to the nucleoplasm. It localises to the nuclear pore complex. In terms of biological role, required for the assembly of a functional nuclear pore complex (NPC) on the surface of chromosomes as nuclei form at the end of mitosis. May initiate NPC assembly by binding to chromatin and recruiting the Nup107-160 subcomplex of the NPC. Also required for the localization of the Nup107-160 subcomplex of the NPC to the kinetochore during mitosis and for the completion of cytokinesis. The sequence is that of Protein ELYS (AHCTF1) from Homo sapiens (Human).